A 115-amino-acid polypeptide reads, in one-letter code: Autophagy-related protein 8i (115 aa).

G115 is lipidated: Phosphatidylethanolamine amidated glycine.

Belongs to the ATG8 family. As to quaternary structure, interacts with ATG4. Interacts with NBR1. Post-translationally, gly-115 forms then a thioester bond with the 'Cys-558' of ATG7 (E1-like activating enzyme) before being transferred to the 'Cys-258' of ATG3 (the specific E2 conjugating enzyme), in order to be finally amidated with phosphatidylethanolamine. This lipid modification anchors ATG8 to autophagosomes. Constitutively expressed.

The protein localises to the cytoplasmic vesicle. The protein resides in the autophagosome membrane. It is found in the vacuole membrane. Its subcellular location is the cytoplasm. It localises to the cytoskeleton. In terms of biological role, ubiquitin-like modifier involved in autophagosomes formation. May mediate the delivery of the autophagosomes to the vacuole via the microtubule cytoskeleton. The chain is Autophagy-related protein 8i (ATG8I) from Arabidopsis thaliana (Mouse-ear cress).